The following is an 817-amino-acid chain: MPPPPEPRQIKRPRLSLSCIVCRRRKVRCGREHPECANCVRMKENCVYKTMVHDEFTGRVRQVSPPPVPQGDNPNGPEFCANNSEERTGGFTWSHWMSQGSGNVLDLSDEAPLPRPTISPASAPPPQKRSTQAKCDASSVPHPHHSSTILTPAPSSHPQVDLVYPTVPSWEEAIQLPDNHHASSRAGTSRTSSVSQDASPAVSESARAPSTSTSYSGLPSPDYLSVRRGARVRYIGQAFWGLVAGKETLSDDFFDCNRDASMEQSLTHISSLGMFNLLRSLPTKPVSDALLDAFFFAVWPLSPLVHGPTLRADYDNFWEWCRNSDRALPPEKVRDDPTFLCLLFAILYCGASAAPPTSWACTNLQSLRKETTIKHLKSAYTTSLSLCQHLEHPTLNTLVSTLLTAPFLDRDVAPMRNMVSVSTTVRIAQSMGLHREGTWSSSLSPVDREIRRRAWWYIIGLDVQSSISTGLPPCYATEALDIVSMIADTRDEDIGDLSNHRSPEPVPRPSEQSLAVILAIARSETARLQSKIVSRLQNGRRLAQTELTELVTSAKKLQQKLDTLIARVPSQGIPEKGFIPSRLAKASPLYQTPAFSPYVWFCYRHYGPLQCVFLILVYLHTFPESGDIVLARYCIDEIIDHTVSHYQVPQDSFGATRADNSESDEGATEDQIPLAIQVLVDLHNRLQSHPRSDNQTTDRLDGNEYQFSPYSLELGIQGTEEDTIDKSIFSLPSLSSSSSRTHIHRNQEAPSTTTAPQMPSGTKHGPPSSVFVADSDGGSDLDILASLSDFETWSSSLVVDPSDILAHPTSMAPHHPV.

The zn(2)-C6 fungal-type DNA-binding region spans 19–46 (CIVCRRRKVRCGREHPECANCVRMKENC). 3 disordered regions span residues 102–161 (GNVL…PQVD), 180–218 (HHASSRAGTSRTSSVSQDASPAVSESARAPSTSTSYSGL), and 733–775 (SLSS…VADS). The span at 113-127 (LPRPTISPASAPPPQ) shows a compositional bias: pro residues. The span at 146–158 (SSTILTPAPSSHP) shows a compositional bias: polar residues. Residues 184–195 (SRAGTSRTSSVS) show a composition bias toward low complexity. 2 stretches are compositionally biased toward polar residues: residues 208–217 (APSTSTSYSG) and 748–760 (EAPSTTTAPQMPS).

The protein resides in the nucleus. Transcription factor that regulates the expression of the gene cluster that mediates the biosynthesis of yanuthone D, a fungal isoprenoid epoxycyclohexenone that acts as an antibiotic against fungi and bacteria. This Aspergillus niger (strain ATCC 1015 / CBS 113.46 / FGSC A1144 / LSHB Ac4 / NCTC 3858a / NRRL 328 / USDA 3528.7) protein is Transcription factor yanR.